A 62-amino-acid chain; its full sequence is Large ribosomal subunit protein uL29 (62 aa).

The protein belongs to the universal ribosomal protein uL29 family.

The chain is Large ribosomal subunit protein uL29 from Geobacter metallireducens (strain ATCC 53774 / DSM 7210 / GS-15).